The following is a 158-amino-acid chain: Pathogenesis-related protein 2 (158 aa).

This sequence belongs to the BetVI family.

The polypeptide is Pathogenesis-related protein 2 (PR2) (Petroselinum crispum (Parsley)).